Consider the following 366-residue polypeptide: N-acetyl-L-citrulline deacetylase (366 aa).

Co(2+) contacts are provided by histidine 72 and aspartate 103. Residue glutamate 130 is the Proton donor/acceptor of the active site. Glutamate 155 contacts Co(2+).

This sequence belongs to the peptidase M20A family. N-acetylcitrulline deacetylase subfamily. Forms homodimers in the crystal, but higher order oligomers may form in solution. It depends on Co(2+) as a cofactor.

It catalyses the reaction N(2)-acetyl-L-citrulline + H2O = L-citrulline + acetate. The catalysed reaction is N(2)-acetyl-L-ornithine + H2O = L-ornithine + acetate. It functions in the pathway amino-acid biosynthesis; L-arginine biosynthesis. Its function is as follows. Catalyzes the deacetylation of N-acetyl-L-citrulline to produce L-citrulline. This is a step in an alternative arginine biosynthesis pathway. Is also able to catalyze the deacetylation of N-acetylornithine in vitro, with almost equal velocity. However, this reaction may be not relevant in vivo since Xanthomonas does not possess the canonical argF gene and cannot convert ornithine to citrulline via ArgF'. The protein is N-acetyl-L-citrulline deacetylase of Xanthomonas campestris pv. campestris (strain ATCC 33913 / DSM 3586 / NCPPB 528 / LMG 568 / P 25).